A 321-amino-acid polypeptide reads, in one-letter code: Annexin A5 (321 aa).

Ala2 carries the N-acetylalanine modification. Annexin repeat units lie at residues 15-86 (FDER…ALMK), 87-158 (PSRL…VLLQ), 170-242 (AQVE…AVVK), and 246-317 (SIPA…LLCG). A Glycyl lysine isopeptide (Lys-Gly) (interchain with G-Cter in SUMO1); alternate cross-link involves residue Lys29. A Glycyl lysine isopeptide (Lys-Gly) (interchain with G-Cter in SUMO2); alternate cross-link involves residue Lys29. N6-acetyllysine is present on residues Lys70, Lys76, Lys79, Lys97, and Lys101. The residue at position 290 (Lys290) is an N6-succinyllysine. The [IL]-x-C-x-x-[DE] motif signature appears at 314–320 (LLCGGED).

It belongs to the annexin family. Monomer. Binds ATRX and EIF5B. S-nitrosylation is induced by interferon-gamma and oxidatively-modified low-densitity lipoprotein (LDL(ox)) possibly implicating the iNOS-S100A8/9 transnitrosylase complex.

Functionally, this protein is an anticoagulant protein that acts as an indirect inhibitor of the thromboplastin-specific complex, which is involved in the blood coagulation cascade. This Bos taurus (Bovine) protein is Annexin A5 (ANXA5).